Consider the following 406-residue polypeptide: Inner kinetochore subunit OKP1 (406 aa).

Disordered regions lie at residues 1 to 37 (MAADRDNFLQNIENDSINNGQAMDLSPNRSSSESDSS) and 59 to 122 (TQSK…TSGE). Residues 8–21 (FLQNIENDSINNGQ) show a composition bias toward polar residues. Positions 26–37 (SPNRSSSESDSS) are enriched in low complexity. Residues 69-78 (NSDDAEEGEI) show a composition bias toward acidic residues. Ser70 is modified (phosphoserine). Basic and acidic residues-rich tracts occupy residues 79 to 89 (EERTNKEEGQY) and 97 to 106 (LRFEVGKEST). Residues 107-122 (GKLQSHLSDGSATSGE) are compositionally biased toward polar residues. Residues 239–285 (SKRQFIQNRYSQELQNNERLEAILSREQNLLEETRKLCMNLKTNNKK) are a coiled coil. The CTF19-MCM21 binding motif stretch occupies residues 317 to 340 (MHPDGPVTFRNDSHELNLMLNDPI). The tract at residues 353-400 (VLSLLPSLKEYTKKSKELKETMGQMISDSHEEEIKEVFVPHHESHQDK) is interaction with NKP1-NKP2. The segment at 379-406 (SDSHEEEIKEVFVPHHESHQDKTEEDIH) is disordered. Residues 380 to 406 (DSHEEEIKEVFVPHHESHQDKTEEDIH) show a composition bias toward basic and acidic residues.

The protein belongs to the CENP-Q/OKP1 family. In terms of assembly, component of the heterotetrameric kinetochore subcomplex COMA, which consists of AME1, CTF19, MCM21 and OKP1. The COMA subcomplex is part of a larger constitutive centromere-associated network (CCAN) (also known as central kinetochore CTF19 complex in yeast), which is composed of at least AME1, CHL4, CNN1, CTF3, CTF19, IML3, MCM16, MCM21, MCM22, MHF1, MHF2, MIF2, NKP1, NKP2, OKP1 and WIP1. COMA binds the centromeric nucleosome-binding protein MIF2, and to the outer kinetochore MIND subcomplex. OKP1 interacts directly with AME1, with an NKP1-NKP2 dimer, and with CTF19-MCM21.

The protein resides in the nucleus. Its subcellular location is the chromosome. It localises to the centromere. The protein localises to the kinetochore. Component of the kinetochore, a multiprotein complex that assembles on centromeric DNA and attaches chromosomes to spindle microtubules, mediating chromosome segregation and sister chromatid segregation during meiosis and mitosis. Component of the inner kinetochore COMA complex, which connects centromere-associated proteins and the outer kinetochore. COMA interacts with other inner kinetochore proteins to form the inner kinetochore constitutive centromere-associated network (CCAN), which serves as a structural platform for outer kinetochore assembly. The chain is Inner kinetochore subunit OKP1 from Saccharomyces cerevisiae (strain ATCC 204508 / S288c) (Baker's yeast).